Consider the following 323-residue polypeptide: ATP synthase gamma chain (323 aa).

It belongs to the ATPase gamma chain family. F-type ATPases have 2 components, CF(1) - the catalytic core - and CF(0) - the membrane proton channel. CF(1) has five subunits: alpha(3), beta(3), gamma(1), delta(1), epsilon(1). CF(0) has three main subunits: a, b and c.

Its subcellular location is the cell inner membrane. Functionally, produces ATP from ADP in the presence of a proton gradient across the membrane. The gamma chain is believed to be important in regulating ATPase activity and the flow of protons through the CF(0) complex. In Rickettsia africae (strain ESF-5), this protein is ATP synthase gamma chain.